Consider the following 106-residue polypeptide: Large ribosomal subunit protein eL42 (106 aa).

The interval 37–56 is disordered; the sequence is SQGKRRYDRKQSGYGGQTKP.

It belongs to the eukaryotic ribosomal protein eL42 family.

The chain is Large ribosomal subunit protein eL42 (RPL44) from Pichia kudriavzevii (Yeast).